The primary structure comprises 858 residues: Neurofilament medium polypeptide (858 aa).

Position 2 is an N-acetylserine (S2). A head region spans residues 2–99 (SYTMEPLGNP…KLSRSNEKEQ (98 aa)). Residues 22–57 (ATYSRASASPSSGFRSQSWSRGSGSTVSSSYKRTNL) are disordered. Residues 30–54 (SPSSGFRSQSWSRGSGSTVSSSYKR) are compositionally biased toward low complexity. T47 carries an O-linked (GlcNAc) threonine glycan. The IF rod domain maps to 96 to 407 (EKEQLQGLND…KLLEGEETRF (312 aa)). The tract at residues 100 to 131 (LQGLNDRFAGYIEKVHYLEQQNKEIEAELAAL) is coil 1A. The linker 1 stretch occupies residues 132-144 (RQKHAGRAQLGDA). Residues 145–243 (YEQELRELRG…EEEVAELLAQ (99 aa)) are coil 1B. Residues 244–260 (LQASHATVERKDYLKTD) form a linker 12 region. The segment at 261-282 (LTTALKEIRAQLECQSDHNMHQ) is coil 2A. A linker 2 region spans residues 283 to 286 (AEEW). Residues 287 to 407 (FKCRYAKLTE…KLLEGEETRF (121 aa)) form a coil 2B region. The tail stretch occupies residues 408-858 (SAFSGSITGP…SHAVVKEIKE (451 aa)). T427 carries an O-linked (GlcNAc) threonine glycan. A disordered region spans residues 478 to 788 (AAKAQEEEQE…VVTNGLDVSP (311 aa)). Acidic residues-rich tracts occupy residues 484 to 500 (EEQE…EEEA) and 509 to 524 (AAEE…EEEE). Positions 525–541 (AAKSDAAEEGGSKKEEI) are enriched in basic and acidic residues. Acidic residues predominate over residues 542–555 (EEKEEGEEAEEEEA). Residues 556–572 (EAKGKAEEAGAKVEKVK) show a composition bias toward basic and acidic residues. The span at 576–586 (AKSPPKSPPKS) shows a compositional bias: pro residues. The span at 590-601 (EQAKAVQKAAAE) shows a compositional bias: low complexity. Residues 602 to 623 (VGKDQKAEKAAEKAAKEEKAAS) are compositionally biased toward basic and acidic residues. The span at 624 to 637 (PEKPATPKVTSPEK) shows a compositional bias: low complexity. 2 stretches are compositionally biased toward basic and acidic residues: residues 651-664 (ITPE…KPTT) and 675-727 (ASPE…KAVV). Low complexity predominate over residues 728–743 (EESITVTKVTKVTAEV). Positions 744–771 (EVSKEARKEDIAVNGEVEEKKDEAKEKE) are enriched in basic and acidic residues.

It belongs to the intermediate filament family. There are a number of repeats of the tripeptide K-S-P, NFM is phosphorylated on a number of the serines in this motif. It is thought that phosphorylation of NFM results in the formation of interfilament cross bridges that are important in the maintenance of axonal caliber. Post-translationally, phosphorylation seems to play a major role in the functioning of the larger neurofilament polypeptides (NF-M and NF-H), the levels of phosphorylation being altered developmentally and coincident with a change in the neurofilament function.

The protein localises to the cytoplasm. Its subcellular location is the cytoskeleton. The protein resides in the cell projection. It localises to the axon. Neurofilaments usually contain three intermediate filament proteins: NEFL, NEFM, and NEFH which are involved in the maintenance of neuronal caliber. May additionally cooperate with other neuronal intermediate filament proteins to form neuronal filamentous networks. This is Neurofilament medium polypeptide (NEFM) from Gallus gallus (Chicken).